The primary structure comprises 863 residues: DNA replication licensing factor mcm4 (863 aa).

The tract at residues Met-1–Ala-121 is disordered. 2 stretches are compositionally biased toward polar residues: residues Ser-54 to Gly-64 and Ser-78 to Val-99. The segment at Cys-306 to Cys-331 adopts a C4-type zinc-finger fold. One can recognise an MCM domain in the interval Ile-458–Val-667. ATP contacts are provided by Tyr-471, Arg-497, Lys-516, Ser-517, Asn-618, Arg-643, Arg-732, and Glu-735. The short motif at Ser-642–Asp-645 is the Arginine finger element.

It belongs to the MCM family. As to quaternary structure, component of the mcm2-7 complex (RLF-M). The complex forms a toroidal hexameric ring with the proposed subunit order mcm2-mcm6-mcm4-mcm7-mcm3-mcm5. The heterodimer of mmcm3/mcm5 interacts with mcm4, mmcm6, mcm7 and weakly with mcm2. Component of the CMG helicase complex, composed of the mcm2-7 complex, the GINS complex and cdc45. In terms of processing, hyperphosphorylated during mitosis in a mechanism requiring cdc2-cyclin B and other kinases. Undergoes dephosphorylation after exiting mitosis, existing in a partially phosphorylated state in the cytosolic interphase mcm complex which associates with the pre-replication complexes (pre-Rcs). Complete dephosphorylation inactivates the mcm complex, preventing its binding to chromatin. Becomes actively phosphorylated during S phase once the mcm complex is assembled on the chromatin. This chromatin-associated phosphorylation occurs during the activation of the pre-Rcs and is independent of cdks. Phosphorylated by the cdc7-dbf4b complex.

The protein localises to the nucleus. Its subcellular location is the chromosome. The enzyme catalyses ATP + H2O = ADP + phosphate + H(+). Acts as a component of the MCM2-7 complex (MCM complex) which is the replicative helicase essential for 'once per cell cycle' DNA replication initiation and elongation in eukaryotic cells. Core component of CDC45-MCM-GINS (CMG) helicase, the molecular machine that unwinds template DNA during replication, and around which the replisome is built. The active ATPase sites in the MCM2-7 ring are formed through the interaction surfaces of two neighboring subunits such that a critical structure of a conserved arginine finger motif is provided in trans relative to the ATP-binding site of the Walker A box of the adjacent subunit. The six ATPase active sites, however, are likely to contribute differentially to the complex helicase activity. The chain is DNA replication licensing factor mcm4 from Xenopus tropicalis (Western clawed frog).